A 212-amino-acid chain; its full sequence is Imidazole glycerol phosphate synthase subunit HisH (212 aa).

The region spanning 2–212 (RVVVIDYNGG…ILGNFLRWTS (211 aa)) is the Glutamine amidotransferase type-1 domain. C85 (nucleophile) is an active-site residue. Active-site residues include H192 and E194.

In terms of assembly, heterodimer of HisH and HisF.

The protein resides in the cytoplasm. It catalyses the reaction 5-[(5-phospho-1-deoxy-D-ribulos-1-ylimino)methylamino]-1-(5-phospho-beta-D-ribosyl)imidazole-4-carboxamide + L-glutamine = D-erythro-1-(imidazol-4-yl)glycerol 3-phosphate + 5-amino-1-(5-phospho-beta-D-ribosyl)imidazole-4-carboxamide + L-glutamate + H(+). It carries out the reaction L-glutamine + H2O = L-glutamate + NH4(+). The protein operates within amino-acid biosynthesis; L-histidine biosynthesis; L-histidine from 5-phospho-alpha-D-ribose 1-diphosphate: step 5/9. In terms of biological role, IGPS catalyzes the conversion of PRFAR and glutamine to IGP, AICAR and glutamate. The HisH subunit catalyzes the hydrolysis of glutamine to glutamate and ammonia as part of the synthesis of IGP and AICAR. The resulting ammonia molecule is channeled to the active site of HisF. This Gluconobacter oxydans (strain 621H) (Gluconobacter suboxydans) protein is Imidazole glycerol phosphate synthase subunit HisH.